We begin with the raw amino-acid sequence, 361 residues long: Phospho-N-acetylmuramoyl-pentapeptide-transferase (361 aa).

10 helical membrane passes run 28-48 (LAVL…IKFL), 74-94 (TMGG…LADL), 99-119 (IWIT…DDYA), 135-155 (LLLQ…TIDS), 167-187 (SLSM…IVGA), 203-223 (VPIA…GNLI), 236-256 (TGEL…FLWF), 263-283 (VFMG…ISVI), 288-308 (IVLG…IMQV), and 338-358 (KVVI…LSSL).

Belongs to the glycosyltransferase 4 family. MraY subfamily. Mg(2+) is required as a cofactor.

Its subcellular location is the cell inner membrane. The enzyme catalyses UDP-N-acetyl-alpha-D-muramoyl-L-alanyl-gamma-D-glutamyl-meso-2,6-diaminopimeloyl-D-alanyl-D-alanine + di-trans,octa-cis-undecaprenyl phosphate = di-trans,octa-cis-undecaprenyl diphospho-N-acetyl-alpha-D-muramoyl-L-alanyl-D-glutamyl-meso-2,6-diaminopimeloyl-D-alanyl-D-alanine + UMP. Its pathway is cell wall biogenesis; peptidoglycan biosynthesis. Catalyzes the initial step of the lipid cycle reactions in the biosynthesis of the cell wall peptidoglycan: transfers peptidoglycan precursor phospho-MurNAc-pentapeptide from UDP-MurNAc-pentapeptide onto the lipid carrier undecaprenyl phosphate, yielding undecaprenyl-pyrophosphoryl-MurNAc-pentapeptide, known as lipid I. The sequence is that of Phospho-N-acetylmuramoyl-pentapeptide-transferase from Rickettsia bellii (strain RML369-C).